The following is a 142-amino-acid chain: Protein spalt-accessory (142 aa).

A signal peptide spans 1-16 (MKLLIALFALVTAVNA). The segment at 75–142 (GFAGQGSPNQ…HHEHHGHHRH (68 aa)) is disordered. The segment covering 107 to 124 (GHFHENPHEYPEHHGDHH) has biased composition (basic and acidic residues). Over residues 125–142 (REHHEHHGHHEHHGHHRH) the composition is skewed to basic residues.

It localises to the secreted. Its function is as follows. Likely to be involved in the establishment of the head. The chain is Protein spalt-accessory (sala) from Drosophila melanogaster (Fruit fly).